The following is a 675-amino-acid chain: Protein distal antenna (675 aa).

The HTH psq-type domain occupies 5 to 56 (TKGKRPLRHLTATDKIDAIQRIHDGESKASVARDIGVPESTLRGWCKNEEKL). A DNA-binding region (H-T-H motif) is located at residues 32 to 52 (KASVARDIGVPESTLRGWCKN). Disordered stretches follow at residues 239–269 (QSLR…KNPS), 337–393 (LYSS…PEDT), 458–534 (LNII…SKCN), 546–596 (FQNP…AHKS), and 655–675 (ERQQ…RRRK). Positions 339 to 368 (SSMPRPSSPQQSSSPPQQHQQVQHHPSTQT) are enriched in low complexity. Residues 369-384 (PTPPIVSTPQPTPPSS) are compositionally biased toward pro residues. A compositionally biased stretch (basic and acidic residues) spans 469-478 (VKSEPEDLSN). Positions 479–493 (HNHSSSNAAAVAAPA) are enriched in low complexity. Positions 499-508 (FNPSPSTSAK) are enriched in polar residues. The span at 513–528 (QEDDEEQAGPADDESP) shows a compositional bias: acidic residues. Low complexity predominate over residues 559 to 579 (NLSIRSNNSPRRRSVSPAVSN).

Homomers. Interacts with itself, danr, ey and dac to form a complex (or complexes) containing the RD factors.

It is found in the nucleus. Functionally, probable transcription factor with a role in the retinal determination (RD) network. Contributes to differentiation of antenna-specific characteristics. The protein is Protein distal antenna of Aedes aegypti (Yellowfever mosquito).